An 89-amino-acid chain; its full sequence is Sodium channel toxin To13 (89 aa).

The first 18 residues, 1–18, serve as a signal peptide directing secretion; it reads MKTLFLIITSFILLEVEG. The LCN-type CS-alpha/beta domain occupies 20–87; the sequence is KNGYPRDSKG…TWKNKEPKCK (68 aa). Cystine bridges form between cysteine 30-cysteine 86, cysteine 34-cysteine 60, cysteine 45-cysteine 67, and cysteine 49-cysteine 69.

Belongs to the long (4 C-C) scorpion toxin superfamily. Sodium channel inhibitor family. Expressed by the venom gland.

The protein resides in the secreted. Functionally, inhibits voltage-gated sodium channels (Nav). This Tityus obscurus (Amazonian scorpion) protein is Sodium channel toxin To13.